The chain runs to 98 residues: NADH-ubiquinone oxidoreductase chain 4L (98 aa).

The next 3 helical transmembrane spans lie at Met-1–Leu-21, Ser-29–Leu-49, and Ile-61–Val-81.

The protein belongs to the complex I subunit 4L family. As to quaternary structure, core subunit of respiratory chain NADH dehydrogenase (Complex I) which is composed of 45 different subunits.

Its subcellular location is the mitochondrion inner membrane. It carries out the reaction a ubiquinone + NADH + 5 H(+)(in) = a ubiquinol + NAD(+) + 4 H(+)(out). Core subunit of the mitochondrial membrane respiratory chain NADH dehydrogenase (Complex I) which catalyzes electron transfer from NADH through the respiratory chain, using ubiquinone as an electron acceptor. Part of the enzyme membrane arm which is embedded in the lipid bilayer and involved in proton translocation. The sequence is that of NADH-ubiquinone oxidoreductase chain 4L (MT-ND4L) from Vampyrodes caraccioli (Great stripe-faced bat).